The sequence spans 652 residues: MRFAASIAVALPVIHAASAQGFPPPVKGVTVVKSKFDENVKITYKENDICETTQGVRSFTGHVHLPPDNDDFGVYRNYSINTFFWFFEAREDPKNAPLSIWLNGGPGSSSMIGLFQENGPCWVNEDSKSTTNNSFSWNNKVNMLYIDQPNQVGFSYDVPTNITYSTINDTISVADFSNGVPAQNLSTLVGTGSSQNPWATANNTVNAARSIWHFAQVWFQEFPEHKPNNNKISIWTESYGGRYGPSFASYFQEQNEKIKNHTITEEGEMHILNLDTLGIINGCIDLMFQAESYAEFPYNNTYGIKAYTKEKRDAILHDIHRPDGCFDKVTKCREAAKEGDPHFYSNNATVNTICADANSACDKYLMDPFQETNLGYYDIAHPLQDPFPPPFYKGFLSQSSVLSDMGSPVNFSQYAQAVGKSFHGVGDYARPDVRGFTGDIAYLLESGVKVALVYGDRDYICNWFGGEQVSLGLNYTGTQDFHRAKYADVKVNSSYVGGVVRQHGNFSFTRVFEAGHEVPGYQPETALKIFERIMFNKDISTGEIDIAQKPDYGTTGTESTFHIKNDIPPSPEPTCYLLSADGTCTPEQLNAIKDGTAVVENYIIKSPAASKGNPPPTTTSSPTAAPTAGSAMLKAPVAMLAISALTVLAFFL.

An N-terminal signal peptide occupies residues 1–19; sequence MRFAASIAVALPVIHAASA. A disulfide bond links Cys50 and Cys121. N-linked (GlcNAc...) asparagine glycans are attached at residues Asn77, Asn132, Asn161, Asn168, Asn184, and Asn202. Ser238 is a catalytic residue. 4 N-linked (GlcNAc...) asparagine glycosylation sites follow: Asn260, Asn299, Asn347, and Asn410. Intrachain disulfides connect Cys325–Cys361 and Cys332–Cys354. The active site involves Asp458. Residue Cys461 coordinates substrate. 3 N-linked (GlcNAc...) asparagine glycosylation sites follow: Asn474, Asn492, and Asn505. Residue His516 is part of the active site. Glu517 serves as a coordination point for substrate. Residues 608–627 are disordered; the sequence is AASKGNPPPTTTSSPTAAPT. Over residues 618–627 the composition is skewed to low complexity; it reads TTSSPTAAPT. Gly629 carries GPI-anchor amidated glycine lipidation. Residues 630 to 652 constitute a propeptide, removed in mature form; that stretch reads SAMLKAPVAMLAISALTVLAFFL.

Belongs to the peptidase S10 family.

The protein localises to the cell membrane. It carries out the reaction Preferential release of a C-terminal arginine or lysine residue.. Functionally, extracellular serine carboxypeptidase that contributes to pathogenicity. The chain is Carboxypeptidase S1 homolog A (SCPA) from Trichophyton rubrum (Athlete's foot fungus).